A 221-amino-acid chain; its full sequence is GTP-binding nuclear protein Ran-3 (221 aa).

One can recognise a Small GTPase Ran-type domain in the interval 10–174 (DYPSFKLVIV…LYLARKLAGD (165 aa)). Residue 21–28 (DGGTGKTT) participates in GTP binding. The segment at 40–48 (KKYEPTIGV) is switch-I. GTP is bound by residues G71, 125–128 (NKVD), and 153–155 (SAK). A switch-II region spans residues 71–87 (GQEKFGGLRDGYYIHGQ). Positions 201–221 (EAELAAAASQPLPDDDDDTFE) are disordered.

The protein belongs to the small GTPase superfamily. Ran family. In terms of assembly, found in a nuclear export complex with RanGTP, exportin and pre-miRNA. Interacts with RanBP1a and RanBP1b. Interacts with KPNB1.

It localises to the nucleus. GTP-binding protein involved in nucleocytoplasmic transport. Required for the import of protein into the nucleus and also for RNA export. Involved in chromatin condensation and control of cell cycle. The protein is GTP-binding nuclear protein Ran-3 (RAN3) of Arabidopsis thaliana (Mouse-ear cress).